Here is a 574-residue protein sequence, read N- to C-terminus: Transmembrane protein 108 (574 aa).

A helical membrane pass occupies residues 9–29 (YCQLLSFLLTLALTKALVLAV). The interaction with SH3GL2 stretch occupies residues 31–169 (EPSPRESLQT…ATTRRPPRPP (139 aa)). Disordered stretches follow at residues 32–352 (PSPR…SGVF) and 364–417 (DATV…PRPL). The segment covering 58–86 (TRLSSVLTLNPTPDGPSSQAAATLETTVS) has biased composition (polar residues). Residues 132-160 (LPPGDATPTTTLPTKPAGTTSRPTVAPRA) are compositionally biased toward low complexity. The interval 173-406 (RKGAGGSTRT…SPAEEEAEAS (234 aa)) is interaction with DST (isoform 1). Positions 245-271 (FSSTQPQTVSPATAPRSTSRVPPTTSL) are enriched in polar residues. Residues 292-312 (TSPGGEPAATAATGAPASTQP) are compositionally biased toward low complexity. Over residues 316–332 (PSQSPHGDVQDSASHSD) the composition is skewed to polar residues. Residues 468–488 (IAWVIVAISVPISSCSVLLTV) traverse the membrane as a helical segment. The segment at 489–574 (CCMRRKKKTA…FVGNDQVSEI (86 aa)) is interaction with CYFIP2.

As to quaternary structure, interacts with DST (isoform 1). Interacts with SH3GL2. Interacts (via N-terminus) with CYFIP1 and CYFIP2; the interactions associate TMEM108 with the WAVE1 complex. Glycosylated. As to expression, expressed in the nervous system tissues, such as hippocampus and spinal cord, is barely detectable in peripheral tissues such as heart, lung, liver, kidney and muscle. In brain, highly expressed in dentate gyrus neurons and expressed in cortex, olfactory bulb, ammon's horn, cerebellum, hypothalamus and striatum.

It localises to the membrane. Its subcellular location is the postsynaptic density. The protein resides in the endosome membrane. It is found in the cell projection. The protein localises to the axon. It localises to the dendrite. Its subcellular location is the early endosome. Its function is as follows. Transmembrane protein required for proper cognitive functions. Involved in the development of dentate gyrus (DG) neuron circuitry, is necessary for AMPA receptors surface expression and proper excitatory postsynaptic currents of DG granule neurons. Regulates the organization and stability of the microtubule network of sensory neurons to allow axonal transport. Through the interaction with DST, mediates the docking of the dynein/dynactin motor complex to vesicle cargos for retrograde axonal transport. In hippocampal neurons, required for BDNF-dependent dendrite outgrowth. Cooperates with SH3GL2 and recruits the WAVE1 complex to facilitate actin-dependent BDNF:NTRK2 early endocytic trafficking and mediate signaling from early endosomes. This is Transmembrane protein 108 from Mus musculus (Mouse).